An 895-amino-acid polypeptide reads, in one-letter code: MKIGSGFLSGGGGTGSSGGSGSGGGGSGGGGGGGSSGRRAEMEPTFPQGMVMFNHRLPPVTSFTRPAGSAAPPPQCVLSSSTSAAPAAEPPPPPAPDMTFKKEPAASAAAFPSQRTSWGFLQSLVSIKQEKPADPEEQQSHHHHHHHHYGGLFAGAEERSPGLGGGEGGSHGVIQDLSILHQHVQQQPAQHHRDVLLSSSSRTDDHHGTEEPKQDTNVKKAKRPKPESQGIKAKRKPSASSKPSLVGDGEGAILSPSQKPHICDHCSAAFRSSYHLRRHVLIHTGERPFQCSQCSMGFIQKYLLQRHEKIHSREKPFGCDQCSMKFIQKYHMERHKRTHSGEKPYKCDTCQQYFSRTDRLLKHRRTCGEVIVKGATSAEPGSSNHTNMGNLAVLSQGNTSSSRRKTKSKSIAIENKEQKTGKTNESQISNNINMQSYSVEMPTVSSSGGIIGTGIDELQKRVPKLIFKKGSRKNTDKNYLNFVSPLPDIVGQKSLSGKPSGSLGIVSNNSVETIGLLQSTSGKQGQISSNYDDAMQFSKKRRYLPTASSNSAFSINVGHMVSQQSVIQSAGVSVLDNEAPLSLIDSSALNAEIKSCHDKSGIPDEVLQSILDQYSNKSESQKEDPFNIAEPRVDLHTSGEHSELVQEENLSPGTQTPSNDKASMLQEYSKYLQQAFEKSTNASFTLGHGFQFVSLSSPLHNHTLFPEKQIYTTSPLECGFGQSVTSVLPSSLPKPPFGMLFGSQPGLYLSALDATHQQLTPSQELDDLIDSQKNLETSSAFQSSSQKLTSQKEQKNLESSTGFQIPSQELASQIDPQKDIEPRTTYQIENFAQAFGSQFKSGSRVPMTFITNSNGEVDHRVRTSVSDFSGYTNMMSDVSEPCSTRVKTPTSQSYR.

Disordered stretches follow at residues Met-1–Pro-44 and Phe-63–Ser-113. Residue Lys-2 forms a Glycyl lysine isopeptide (Lys-Gly) (interchain with G-Cter in SUMO2) linkage. Over residues Phe-7 to Ser-36 the composition is skewed to gly residues. Glycyl lysine isopeptide (Lys-Gly) (interchain with G-Cter in SUMO2) cross-links involve residues Arg-65, Lys-101, and Lys-128. Composition is skewed to basic and acidic residues over residues Glu-130–Ser-140 and Arg-202–Val-218. Disordered regions lie at residues Glu-130–Tyr-149 and His-183–Ile-253. Residues Lys-213, Lys-219, Lys-225, Lys-232, Lys-242, and Lys-259 each participate in a glycyl lysine isopeptide (Lys-Gly) (interchain with G-Cter in SUMO2) cross-link. 3 C2H2-type zinc fingers span residues His-261–His-283, Phe-289–His-311, and Phe-317–His-339. Residues Lys-301 and Lys-325 each participate in a glycyl lysine isopeptide (Lys-Gly) (interchain with G-Cter in SUMO2) cross-link. The C2H2-type 4; atypical zinc finger occupies Tyr-345–Cys-367. Residue Lys-373 forms a Glycyl lysine isopeptide (Lys-Gly) (interchain with G-Cter in SUMO2) linkage. The segment at Ser-377–Gln-427 is disordered. Over residues Glu-379 to Asn-398 the composition is skewed to polar residues. The residue at position 395 (Ser-395) is a Phosphoserine. Glycyl lysine isopeptide (Lys-Gly) (interchain with G-Cter in SUMO2) cross-links involve residues Lys-409, Lys-416, Lys-460, and Lys-477. Ser-484 carries the phosphoserine modification. Glycyl lysine isopeptide (Lys-Gly) (interchain with G-Cter in SUMO2) cross-links involve residues Lys-493, Lys-498, Lys-539, Lys-599, Lys-617, and Lys-622. The segment at Ser-638 to Asp-660 is disordered. Polar residues predominate over residues Glu-648 to Asp-660. Ser-651 is subject to Phosphoserine. Residues Lys-661 and Lys-670 each participate in a glycyl lysine isopeptide (Lys-Gly) (interchain with G-Cter in SUMO2) cross-link. A compositionally biased stretch (polar residues) spans Ser-778–Thr-789. The segment at Ser-778 to Gln-817 is disordered. Ser-785 bears the Phosphoserine mark. Residues Lys-787, Lys-792, and Lys-795 each participate in a glycyl lysine isopeptide (Lys-Gly) (interchain with G-Cter in SUMO2) cross-link. Residues Leu-797–Asp-815 are compositionally biased toward polar residues. Ser-807 is subject to Phosphoserine. Glycyl lysine isopeptide (Lys-Gly) (interchain with G-Cter in SUMO2) cross-links involve residues Lys-818 and Lys-840. At Thr-888 the chain carries Phosphothreonine.

Belongs to the krueppel C2H2-type zinc-finger protein family.

The protein resides in the nucleus. Transcription repressor that plays a role in regulation of embryonic stem cells (ESCs) differentiation. Required for ESCs differentiation and acts by mediating autorepression of NANOG in ESCs: binds to the NANOG promoter and promotes association of NANOG protein to its own promoter and recruits the NuRD complex, which deacetylates histones. Not required for establishement and maintenance of ESCs. Represses the transcription of a number of genes including GAST, ODC1 and VIM. Binds to the G-rich box in the enhancer region of these genes. The protein is Zinc finger protein 281 (ZNF281) of Homo sapiens (Human).